Here is a 156-residue protein sequence, read N- to C-terminus: Large ribosomal subunit protein uL15 (156 aa).

Positions 1 to 48 are disordered; sequence MKLHDLKPTPGSRKDRKRVGRGPGGTDKTAGRGHKGQKSRSGAGKGAF.

It belongs to the universal ribosomal protein uL15 family. In terms of assembly, part of the 50S ribosomal subunit. Contacts proteins L4, L21 and L35.

Binds to the 23S rRNA. This chain is Large ribosomal subunit protein uL15 (rplO), found in Deinococcus radiodurans (strain ATCC 13939 / DSM 20539 / JCM 16871 / CCUG 27074 / LMG 4051 / NBRC 15346 / NCIMB 9279 / VKM B-1422 / R1).